Reading from the N-terminus, the 430-residue chain is MHVSTLLVAVLLPLALSKPTPRKKTGSFKVHLARRGETEYSRDGPTDLQRAYAKYGIPTTHEMDGYHPQHISKLPGNSKATAGSGKEGVESQDEKGEVVNNPTNHDIQFLSPVTIGGQPFIMNFDTGSSDTWVMNTQMTDEEAKKDHHLYDPSKSKTASKLVDQTFDIKYGDKTHASGPVYSDVMDIGGATVRNQAIGLPSKVAASLAEDKTSDGLVGLAMTKLNTIRPVKQKTFFENLAEDLDEPVFTAQLRHGKMGSYEFGTIDKSKYHGDLIKVPVINENGFWEIPCSLYSVGKLDKIQTIQNGTGTAILDTGTTLLVLDEKIVKAYYAQVPGARYDPTRFAGWVYPCNSPMPSLFLAVGTDHMAIIPSSLLTFQSYGPGPDGVETCYGGLQSNNAGGIQILGDVFFKALFVVFDQRGPSISLAPHA.

The N-terminal stretch at 1–17 (MHVSTLLVAVLLPLALS) is a signal peptide. The propeptide at 18-87 (KPTPRKKTGS…SKATAGSGKE (70 aa)) is activation peptide. The segment at 66–105 (YHPQHISKLPGNSKATAGSGKEGVESQDEKGEVVNNPTNH) is disordered. Basic and acidic residues predominate over residues 87 to 97 (EGVESQDEKGE). In terms of domain architecture, Peptidase A1 spans 109–427 (FLSPVTIGGQ…DQRGPSISLA (319 aa)). Residue Asp125 is part of the active site. Asn306 is a glycosylation site (N-linked (GlcNAc...) asparagine). Residue Asp314 is part of the active site.

The protein belongs to the peptidase A1 family.

The protein resides in the secreted. In terms of biological role, probable secreted aspartic-type endopeptidase which contributes to virulence. The polypeptide is Probable aspartic-type endopeptidase ARB_07403 (Arthroderma benhamiae (strain ATCC MYA-4681 / CBS 112371) (Trichophyton mentagrophytes)).